The following is a 428-amino-acid chain: C4-dicarboxylate transport protein (428 aa).

Helical transmembrane passes span 8-28 (SLYF…HFYP), 44-64 (LIKM…IAGM), 76-96 (VALL…LIIV), 142-162 (IGAF…LFGF), 184-206 (VIFG…AMAF), 222-242 (LIIC…GSIA), 326-346 (IVHQ…AAGV), and 352-372 (IVLA…LALI).

Belongs to the dicarboxylate/amino acid:cation symporter (DAACS) (TC 2.A.23) family.

It is found in the cell inner membrane. In terms of biological role, responsible for the transport of dicarboxylates such as succinate, fumarate, and malate from the periplasm across the membrane. This Shigella flexneri protein is C4-dicarboxylate transport protein.